A 313-amino-acid polypeptide reads, in one-letter code: Cytochrome c biogenesis protein CcsA (313 aa).

Transmembrane regions (helical) follow at residues 9–29 (ILTHISFSIVSIVITIHLITF), 44–64 (GIIVTFFCITGLLVTRWVSSG), 71–91 (LYESLIFLSWSFSLIHIIPYF), 111–131 (GFATSGILTEIHQSGILVPAL), 143–163 (MILGYAALLCGSLLSVALLVI), 217–237 (VISLGFTFLTIGILSGAVWAN), 244–264 (WNWDPKETWAFITWIVFAIYL), and 278–298 (AIVASIGFLIIWICYFGVNLL).

This sequence belongs to the CcmF/CycK/Ccl1/NrfE/CcsA family. In terms of assembly, may interact with Ccs1.

The protein localises to the plastid. Its subcellular location is the chloroplast thylakoid membrane. Required during biogenesis of c-type cytochromes (cytochrome c6 and cytochrome f) at the step of heme attachment. This is Cytochrome c biogenesis protein CcsA from Solanum lycopersicum (Tomato).